Consider the following 338-residue polypeptide: Phytanoyl-CoA dioxygenase, peroxisomal (338 aa).

A peroxisome-targeting transit peptide spans 1 to 30 (MEQLRAAARLQIVLGHLGRPSAGAVVAHPT). K59 and K108 each carry N6-succinyllysine. 2-oxoglutarate contacts are provided by residues K120, M157, 175–177 (HQD), and W193. Residues H175 and D177 each contribute to the Fe cation site. K231 and K252 each carry N6-succinyllysine. H264 lines the Fe cation pocket. 2-oxoglutarate-binding residues include S266 and R275. Phosphoserine is present on S317.

Belongs to the PhyH family. Interacts with FKBP52. Interacts with PHYHIP. It depends on Fe cation as a cofactor. Requires L-ascorbate as cofactor. ATP serves as cofactor. Mg(2+) is required as a cofactor. In terms of tissue distribution, expressed in liver, kidney, and T-cells, but not in spleen, brain, heart, lung and skeletal muscle.

It is found in the peroxisome. It carries out the reaction phytanoyl-CoA + 2-oxoglutarate + O2 = 2-hydroxyphytanoyl-CoA + succinate + CO2. The catalysed reaction is 3-methylhexadecanoyl-CoA + 2-oxoglutarate + O2 = 2-hydroxy-3-methylhexadecanoyl-CoA + succinate + CO2. It catalyses the reaction hexadecanoyl-CoA + 2-oxoglutarate + O2 = 2-hydroxyhexadecanoyl-CoA + succinate + CO2. The enzyme catalyses octanoyl-CoA + 2-oxoglutarate + O2 = 2-hydroxyoctanoyl-CoA + succinate + CO2. It carries out the reaction decanoyl-CoA + 2-oxoglutarate + O2 = 2-hydroxydecanoyl-CoA + succinate + CO2. The catalysed reaction is 3-methylbutanoyl-CoA + 2-oxoglutarate + O2 = 2-hydroxy-3-methylbutanoyl-CoA + succinate + CO2. It catalyses the reaction heptadecanoyl-CoA + 2-oxoglutarate + O2 = 2-hydroxyheptadecanoyl-CoA + succinate + CO2. The enzyme catalyses eicosanoyl-CoA + 2-oxoglutarate + O2 = 2-hydroxyeicosanoyl-CoA + succinate + CO2. It carries out the reaction octadecanoyl-CoA + 2-oxoglutarate + O2 = 2-hydroxyoctadecanoyl-CoA + succinate + CO2. The catalysed reaction is dodecanoyl-CoA + 2-oxoglutarate + O2 = 2-hydroxydodecanoyl-CoA + succinate + CO2. It catalyses the reaction tetradecanoyl-CoA + 2-oxoglutarate + O2 = 2-hydroxytetradecanoyl-CoA + succinate + CO2. The enzyme catalyses hexanoyl-CoA + 2-oxoglutarate + O2 = 2-hydroxyhexanoyl-CoA + succinate + CO2. It carries out the reaction butanoyl-CoA + 2-oxoglutarate + O2 = 2-hydroxybutanoyl-CoA + succinate + CO2. The catalysed reaction is 3-methylnonanoyl-CoA + 2-oxoglutarate + O2 = 2-hydroxy-3-methylnonanoyl-CoA + succinate + CO2. It catalyses the reaction 3-methylundecanoyl-CoA + 2-oxoglutarate + O2 = 2-hydroxy-3-methylundecanoyl-CoA + succinate + CO2. The enzyme catalyses 3-methyldodecanoyl-CoA + 2-oxoglutarate + O2 = 2-hydroxy-3-methyldodecanoyl-CoA + succinate + CO2. It functions in the pathway lipid metabolism; fatty acid metabolism. In terms of biological role, catalyzes the 2-hydroxylation of not only racemic phytanoyl-CoA and the isomers of 3-methylhexadecanoyl-CoA, but also a variety of other mono-branched 3-methylacyl-CoA esters (with a chain length of at least seven carbon atoms) and straight-chain acyl-CoA esters (with a chain length longer than four carbon atoms). Does not hydroxylate long and very long straight chain acyl-CoAs or 2-methyl- and 4-methyl-branched acyl-CoAs. The protein is Phytanoyl-CoA dioxygenase, peroxisomal (PHYH) of Homo sapiens (Human).